We begin with the raw amino-acid sequence, 215 residues long: Thiamine import ATP-binding protein ThiQ (215 aa).

Residues Ile2–Val215 enclose the ABC transporter domain. Gly32 to Ser39 contributes to the ATP binding site.

Belongs to the ABC transporter superfamily. Thiamine importer (TC 3.A.1.19.1) family. As to quaternary structure, the complex is composed of two ATP-binding proteins (ThiQ), two transmembrane proteins (ThiP) and a solute-binding protein (ThiB).

The protein localises to the cell inner membrane. The catalysed reaction is thiamine(out) + ATP + H2O = thiamine(in) + ADP + phosphate + H(+). Functionally, part of the ABC transporter complex ThiBPQ involved in thiamine import. Responsible for energy coupling to the transport system. The chain is Thiamine import ATP-binding protein ThiQ from Haemophilus influenzae (strain ATCC 51907 / DSM 11121 / KW20 / Rd).